A 72-amino-acid chain; its full sequence is Toxin Acra II-1 (72 aa).

The LCN-type CS-alpha/beta domain occupies valine 3–lysine 67. 3 cysteine pairs are disulfide-bonded: cysteine 18/cysteine 41, cysteine 27/cysteine 46, and cysteine 31/cysteine 48.

Belongs to the long (3 C-C) scorpion toxin superfamily. Sodium channel inhibitor family. Beta subfamily. In terms of tissue distribution, expressed by the venom gland.

It localises to the secreted. Functionally, binds to sodium channels (Nav) and affects the channel activation process. The protein is Toxin Acra II-1 of Androctonus crassicauda (Arabian fat-tailed scorpion).